A 563-amino-acid polypeptide reads, in one-letter code: Ras and Rab interactor-like protein (563 aa).

A disordered region spans residues 181 to 208; sequence GWGTETPQQTEPETGQKYSLAPRKPTPH. Residues 184-196 are compositionally biased toward low complexity; sequence TETPQQTEPETGQ. The VPS9 domain occupies 381 to 518; it reads AQELRRLRRR…IAHYQPDTGR (138 aa). The segment at 539–563 is disordered; it reads TLHQQAQPTAQANQPFEEPWAIGDP. Residues 542–553 are compositionally biased toward low complexity; it reads QQAQPTAQANQP.

Interacts with RAB5A, RAB22A and MUSK. Detected in thymus and spleen (at protein level). Detected in lung, liver, kidney, spleen, thymus and skeletal muscle.

It localises to the cell projection. The protein localises to the ruffle. The protein resides in the cytoplasmic vesicle. Its function is as follows. Guanine nucleotide exchange factor (GEF) for RAB5A and RAB22A that activates RAB5A and RAB22A by exchanging bound GDP for free GTP. Plays a role in endocytosis via its role in activating Rab family members. The protein is Ras and Rab interactor-like protein (Rinl) of Mus musculus (Mouse).